The sequence spans 499 residues: Pentatricopeptide repeat-containing protein PPR5, chloroplastic (499 aa).

Over residues 1–12 the composition is skewed to low complexity; sequence MLACPSTSSPWP. Positions 1–28 are disordered; the sequence is MLACPSTSSPWPQRQPPSPCPGGGGGAT. A chloroplast-targeting transit peptide spans 1 to 45; it reads MLACPSTSSPWPQRQPPSPCPGGGGGATRHVALAARSKRRGAGPA. 9 PPR repeats span residues 123 to 157, 158 to 193, 198 to 232, 233 to 267, 268 to 302, 303 to 337, 338 to 372, 373 to 407, and 408 to 442; these read DNGI…GCKP, DTSV…KCIE, TIVT…VVSP, DVYT…QCRP, DVIT…KERP, THPT…GFKP, NYVT…QTKV, HLSS…CVVP, and NGST…GIVP. The tract at residues 458-499 is disordered; the sequence is DRKPRTSPGINSASKPSTDSAGDSETATSDKPEVSVWHVAAT. Polar residues predominate over residues 465 to 484; it reads PGINSASKPSTDSAGDSETA.

The protein belongs to the PPR family. P subfamily.

The protein resides in the plastid. The protein localises to the chloroplast. Involved in the biogenesis of the plastid translation machinery by promoting the splicing of group II introns in chloroplasts. Stabilizes the chloroplast trnG pre-RNA by directly binding to a group II intron, where it protects an endonuclease-sensitive site and stimulates splicing. Binds specific sites within group II intron trnG pre-RNA. Binds with high affinity to the 5'-UTR of the chloroplastic petA mRNA. The sequence is that of Pentatricopeptide repeat-containing protein PPR5, chloroplastic from Zea mays (Maize).